Consider the following 694-residue polypeptide: Elongation factor G (694 aa).

A tr-type G domain is found at 6 to 288 (KLYRNIGIAA…GVIEYLPSPT (283 aa)). GTP is bound by residues 15–22 (AHVDAGKT), 86–90 (DTPGH), and 140–143 (NKMD).

This sequence belongs to the TRAFAC class translation factor GTPase superfamily. Classic translation factor GTPase family. EF-G/EF-2 subfamily.

It is found in the cytoplasm. Catalyzes the GTP-dependent ribosomal translocation step during translation elongation. During this step, the ribosome changes from the pre-translocational (PRE) to the post-translocational (POST) state as the newly formed A-site-bound peptidyl-tRNA and P-site-bound deacylated tRNA move to the P and E sites, respectively. Catalyzes the coordinated movement of the two tRNA molecules, the mRNA and conformational changes in the ribosome. The chain is Elongation factor G from Legionella pneumophila subsp. pneumophila (strain Philadelphia 1 / ATCC 33152 / DSM 7513).